The primary structure comprises 470 residues: Ribosomal protein uS12 methylthiotransferase RimO (470 aa).

The MTTase N-terminal domain occupies 4 to 120 (TRVYLHTLGC…IARVVSDAQA (117 aa)). Residues C13, C49, C83, C155, C159, and C162 each coordinate [4Fe-4S] cluster. The Radical SAM core domain maps to 141–371 (SLPSHTAYLK…MALQQEISRE (231 aa)). The TRAM domain maps to 374 to 442 (RAMVGRRLEV…EYDLVGHVVA (69 aa)). The disordered stretch occupies residues 447–470 (RARRPLPAPAGGETPRRGGLPVVG).

The protein belongs to the methylthiotransferase family. RimO subfamily. It depends on [4Fe-4S] cluster as a cofactor.

It localises to the cytoplasm. It catalyses the reaction L-aspartate(89)-[ribosomal protein uS12]-hydrogen + (sulfur carrier)-SH + AH2 + 2 S-adenosyl-L-methionine = 3-methylsulfanyl-L-aspartate(89)-[ribosomal protein uS12]-hydrogen + (sulfur carrier)-H + 5'-deoxyadenosine + L-methionine + A + S-adenosyl-L-homocysteine + 2 H(+). Catalyzes the methylthiolation of an aspartic acid residue of ribosomal protein uS12. This chain is Ribosomal protein uS12 methylthiotransferase RimO, found in Anaeromyxobacter sp. (strain Fw109-5).